The chain runs to 161 residues: Probable metalloprotease HVO_1016 (161 aa).

Residues 10-131 enclose the MPN domain; sequence VGIAADALDF…WEAFDQSGEV (122 aa). Glu-31 acts as the Proton donor/acceptor in catalysis. Positions 87, 89, and 100 each coordinate Zn(2+). The JAMM motif signature appears at 87–100; it reads HSHPNGVLRPSDAD.

Belongs to the peptidase M67B family. As to quaternary structure, monomer and homodimer. Zn(2+) is required as a cofactor.

Its function is as follows. Probable metalloprotease. Does not hydrolyze SAMP1- and SAMP2-protein conjugates, diglycine-AMC, Ub-AMC, hemoglobin, cytochrome c, carbonic anhydrase, creatinine phosphokinase, beta-amylase and bovine serum albumin. This chain is Probable metalloprotease HVO_1016, found in Haloferax volcanii (strain ATCC 29605 / DSM 3757 / JCM 8879 / NBRC 14742 / NCIMB 2012 / VKM B-1768 / DS2) (Halobacterium volcanii).